A 213-amino-acid polypeptide reads, in one-letter code: Charged multivesicular body protein 2b (213 aa).

The residue at position 2 (A2) is an N-acetylalanine. Positions 25–55 (QRAIIRDRAALEKQEKQLELEIKKMAKIGNK) form a coiled coil. Low complexity predominate over residues 179–194 (AKAPSAARSLPSASTS). The segment at 179–199 (AKAPSAARSLPSASTSKATIS) is disordered. S199 carries the phosphoserine modification. Residues 201 to 211 (EEIERQLKALG) carry the MIT-interacting motif motif.

It belongs to the SNF7 family. Probable core component of the endosomal sorting required for transport complex III (ESCRT-III). ESCRT-III components are thought to multimerize to form a flat lattice on the perimeter membrane of the endosome. Several assembly forms of ESCRT-III may exist that interact and act sequentially. Interacts with CHMP2A. Interacts with VPS4A. Interacts with VPS4B; the interaction is direct. Widely expressed. Expressed in brain, heart, skeletal muscle, spleen, kidney, liver, small intestine, pancreas, lung, placenta and leukocytes. In brain, it is expressed in cerebellum, cerebral cortex, medulla, spinal cord, occipital lobe, frontal lobe, temporal lobe and putamen.

Its subcellular location is the cytoplasm. It is found in the cytosol. The protein resides in the late endosome membrane. Probable core component of the endosomal sorting required for transport complex III (ESCRT-III) which is involved in multivesicular bodies (MVBs) formation and sorting of endosomal cargo proteins into MVBs. MVBs contain intraluminal vesicles (ILVs) that are generated by invagination and scission from the limiting membrane of the endosome and mostly are delivered to lysosomes enabling degradation of membrane proteins, such as stimulated growth factor receptors, lysosomal enzymes and lipids. The MVB pathway appears to require the sequential function of ESCRT-O, -I,-II and -III complexes. ESCRT-III proteins mostly dissociate from the invaginating membrane before the ILV is released. The ESCRT machinery also functions in topologically equivalent membrane fission events, such as the terminal stages of cytokinesis and the budding of enveloped viruses (HIV-1 and other lentiviruses). ESCRT-III proteins are believed to mediate the necessary vesicle extrusion and/or membrane fission activities, possibly in conjunction with the AAA ATPase VPS4. In Homo sapiens (Human), this protein is Charged multivesicular body protein 2b (CHMP2B).